A 343-amino-acid polypeptide reads, in one-letter code: Trans-enoyl reductase ACTTS2 (343 aa).

42–45 (GDWK) is a binding site for NADP(+). Substrate is bound at residue 128–135 (VGITTVGQ). NADP(+)-binding positions include 162-165 (STAT), 185-188 (SPHN), and Tyr203. 268–272 (GYTAL) provides a ligand contact to substrate. 333 to 334 (VS) is an NADP(+) binding site.

It belongs to the zinc-containing alcohol dehydrogenase family. As to quaternary structure, monomer.

The protein operates within mycotoxin biosynthesis. Its function is as follows. Trans-enoyl reductase; part of the gene clusters that mediate the biosynthesis of the host-selective toxins (HSTs) ACT-toxins responsible for brown spot of tangerine disease by the tangerine pathotype which affects tangerines and mandarins. ACT-toxins consist of three moieties, 9,10-epoxy-8-hydroxy-9-methyl-decatrienoic acid (EDA), valine and a polyketide. ACT-toxin I is toxic to both citrus and pear; toxin II the 5''-deoxy derivative of ACT-toxin I, is highly toxic to pear and slightly toxic to citrus. On cellular level, ACT-toxins affect plasma membrane of susceptible cells and cause a sudden increase in loss of K(+) after a few minutes of toxin treatment. The acyl-CoA ligase ACTT1, the hydrolase ACTT2, the enoyl-CoA hydratases ACTT3 and ACTT6, and the acyl-CoA synthetase ACTT5 are all involved in the biosynthesis of the AK-, AF- and ACT-toxin common 9,10-epoxy-8-hydroxy-9-methyl-decatrienoic acid (EDA) structural moiety. The exact role of each enzyme, and of additional enzymes identified within the AF-toxin clusters have still to be determined. On the other hand, ACTTS1 to ACTTS4 are specific to the tangerine pathotype. The function of ACTTS3 is to elongate the polyketide chain portion of ACT-toxin that is unique to this toxin. The enoyl-reductase ACTTS2 might complement the missing enoyl-reductase (ER) domain in ACTTS3 in the synthesis of the polyketide portion of ACT-toxin. The roles of the nonribosomal peptide synthetases-related proteins ACTTS1 and ACTTS4 have also still not been elucidated. This is Trans-enoyl reductase ACTTS2 from Alternaria alternata (Alternaria rot fungus).